Here is a 1202-residue protein sequence, read N- to C-terminus: MDWTGARARTSWGKRPQTAALGLAATFRHLNTDDHRPIEQTTQTPYSLHRPLPPPSGEPATDTPTHSSCPAPPIAVPSSLLLPRTTHPSSRSSHICACHTPVTARHSPNRLCPVSLPTPTPRSMAQGTKAPAAAMPPNSSVLNMPALNAVNRKKQKRREKEAAKKAAQDPSPPATLRNGVSSGSTHLPANAAHTRQPAPHYDDPELDDPQYDDEDDADFYSDEEAEHYEHAYGTNGHYQQGYAHAPIPSSSKKPRKKKKGAAAHPPHAYTQHVAPRHSPAPNHSMVTSGSKSIWNTSTVEERERIREFWLSLGEDERKSLVKIEKEAVLRKMKEQQKHSCSCSVCGRKRTAIEEELEVLYDAYYEELEQYAHLQQDVGRFLPDANFGHVRSAPHPRPLMTTHPPPGPYDDEEEDEYSGEDDEEDIFKYLPPPDAADFLRFGSSLTVKGGILTVADDLLKNDGKKFIEMMEQLAERRMQREEEANFHAHPSMHRYNSAHNHAPQPEEEEYDDEVDEEEGFEDEDYEEDDEDEDEAMTEEQRMEEGRRMFQIFAARMFEQRVLQAYREKVAAERQKRLLEELEEENEKKDQKEAKKAKEAQKRKEKKEKQRQIKAEEKAKKDAELAAKEAELKAAEEKRLEEQRKKREEQRKKKEAERKAQEEEKQRKEAERQKRLQEERDRQQELERKAREQKALEKKVKDDAKRKERDRAGSQGEGGSGRRRPTTTASARSVKVCRSPHGILSSFVPKAPTPSRPRQTSRQGSHGSSPKTPQVAPGTSKSMSPTSQAQGNMMPKSILTKPANSQHAGHHPLGQPSSPMPPIGPPPGLSGPPGLSMGLPPGLNGFPGPGSMLPNMMSPRPGMPFFPQPPVPQAFRGFPPPGMAGPRGFPMDGPPGLGPMPGFAGPNQAPPFGMGPPTQHSRQGSGSFASMDVPISAPSVQPIHRPAPIQRPSSVKPHDSNKHGQDSDVDELADHLGSKALLDEEDVPEIPDRRSSVQQHGSMRSMPIGFGFPDAPNSHQSTAFNGFGSANTASIWGTPPSQAFSSAAGPWGNSPTSGFFTNPLTMSSPRVSDHRAPNEPRLVWLRRVICTVCKMLSSRHAGPDGFIDANEVQQQLDAFRDPREPVVTQEELKEACDIIDGTHNNGGGSLEYKNLGDGRLSHIKFVDTTGPPPALGEIGSPIPSHSLPVAGFGGRFPGLGPQGF.

7 disordered regions span residues 28 to 217 (RHLN…EDDA), 236 to 291 (GHYQ…SGSK), 390 to 423 (RSAP…DDEE), 487 to 543 (AHPS…RMEE), 579 to 852 (ELEE…SMLP), 904 to 967 (PNQA…DSDV), and 979 to 1015 (LLDE…DAPN). The segment covering 158-167 (REKEAAKKAA) has biased composition (basic and acidic residues). Residues 178 to 187 (NGVSSGSTHL) are compositionally biased toward polar residues. Acidic residues predominate over residues 204–217 (PELDDPQYDDEDDA). Residues 252–261 (KKPRKKKKGA) are compositionally biased toward basic residues. 2 stretches are compositionally biased toward acidic residues: residues 408-423 (YDDE…DDEE) and 504-536 (PEEE…EAMT). Residues 557–704 (EQRVLQAYRE…EKKVKDDAKR (148 aa)) adopt a coiled-coil conformation. The segment covering 579–710 (ELEEENEKKD…DAKRKERDRA (132 aa)) has biased composition (basic and acidic residues). Residues 754–789 (RPRQTSRQGSHGSSPKTPQVAPGTSKSMSPTSQAQG) show a composition bias toward polar residues. The span at 816–828 (SPMPPIGPPPGLS) shows a compositional bias: pro residues. The span at 830–848 (PPGLSMGLPPGLNGFPGPG) shows a compositional bias: low complexity. Residues 916–926 (TQHSRQGSGSF) are compositionally biased toward polar residues. The segment covering 954 to 967 (KPHDSNKHGQDSDV) has biased composition (basic and acidic residues).

It belongs to the NST1 family.

Its subcellular location is the cytoplasm. In terms of biological role, may act as a negative regulator of salt tolerance. This Phaeosphaeria nodorum (strain SN15 / ATCC MYA-4574 / FGSC 10173) (Glume blotch fungus) protein is Stress response protein NST1 (NST1).